The primary structure comprises 123 residues: Amoebiasin-2 (123 aa).

An N-terminal signal peptide occupies residues 1–16 (MKQFIFFALLCTSTYA). Residues 45–50 (NPSTGY) carry the BC loop motif. The DE loop signature appears at 71 to 81 (EPHPSGMVGFP). An FG loop motif is present at residues 105-114 (PWEKGKEPLR).

Belongs to the protease inhibitor I42 family. As to quaternary structure, monomer. May form homodimer. Interacts with cysteine protease CP2. Interacts with cysteine protease CP5.

Its subcellular location is the cytoplasmic vesicle. The protein resides in the lysosome. The protein localises to the phagosome. Its function is as follows. Cysteine protease inhibitor. Inhibits cysteine proteases CP1, CP2 and to a lesser extent CP5. This is Amoebiasin-2 from Entamoeba histolytica (strain ATCC 30459 / HM-1:IMSS / ABRM).